Reading from the N-terminus, the 469-residue chain is 3-isopropylmalate dehydratase large subunit (469 aa).

[4Fe-4S] cluster contacts are provided by C347, C408, and C411.

The protein belongs to the aconitase/IPM isomerase family. LeuC type 1 subfamily. Heterodimer of LeuC and LeuD. Requires [4Fe-4S] cluster as cofactor.

The enzyme catalyses (2R,3S)-3-isopropylmalate = (2S)-2-isopropylmalate. The protein operates within amino-acid biosynthesis; L-leucine biosynthesis; L-leucine from 3-methyl-2-oxobutanoate: step 2/4. In terms of biological role, catalyzes the isomerization between 2-isopropylmalate and 3-isopropylmalate, via the formation of 2-isopropylmaleate. The polypeptide is 3-isopropylmalate dehydratase large subunit (Actinobacillus pleuropneumoniae serotype 5b (strain L20)).